We begin with the raw amino-acid sequence, 199 residues long: Fe/S biogenesis protein NfuA (199 aa).

The [4Fe-4S] cluster site is built by cysteine 151 and cysteine 154.

This sequence belongs to the NfuA family. In terms of assembly, homodimer. [4Fe-4S] cluster serves as cofactor.

In terms of biological role, involved in iron-sulfur cluster biogenesis. Binds a 4Fe-4S cluster, can transfer this cluster to apoproteins, and thereby intervenes in the maturation of Fe/S proteins. Could also act as a scaffold/chaperone for damaged Fe/S proteins. The chain is Fe/S biogenesis protein NfuA from Xanthomonas campestris pv. campestris (strain 8004).